The sequence spans 56 residues: UPF0434 protein Ecaj_0131 (56 aa).

This sequence belongs to the UPF0434 family.

This chain is UPF0434 protein Ecaj_0131, found in Ehrlichia canis (strain Jake).